Reading from the N-terminus, the 212-residue chain is Superoxide dismutase [Fe] 1, chloroplastic (212 aa).

Position 2 is an N-acetylalanine (alanine 2). Fe cation-binding residues include histidine 35, histidine 87, aspartate 169, and histidine 173.

The protein belongs to the iron/manganese superoxide dismutase family. Homodimer. Interacts with cpn20/cpn21. Fe cation is required as a cofactor.

The protein localises to the cell membrane. It localises to the plastid. It is found in the chloroplast membrane. The protein resides in the chloroplast stroma. It carries out the reaction 2 superoxide + 2 H(+) = H2O2 + O2. With respect to regulation, activated by cpn20/cpn21. Its function is as follows. Destroys superoxide anion radicals which are normally produced within the cells and which are toxic to biological systems. In Arabidopsis thaliana (Mouse-ear cress), this protein is Superoxide dismutase [Fe] 1, chloroplastic (FSD1).